We begin with the raw amino-acid sequence, 479 residues long: Ribosomal RNA small subunit methyltransferase F (479 aa).

S-adenosyl-L-methionine contacts are provided by residues 125–131, glutamate 149, aspartate 176, and aspartate 194; that span reads AAAPGSK. Cysteine 247 functions as the Nucleophile in the catalytic mechanism.

It belongs to the class I-like SAM-binding methyltransferase superfamily. RsmB/NOP family.

It localises to the cytoplasm. The enzyme catalyses cytidine(1407) in 16S rRNA + S-adenosyl-L-methionine = 5-methylcytidine(1407) in 16S rRNA + S-adenosyl-L-homocysteine + H(+). Functionally, specifically methylates the cytosine at position 1407 (m5C1407) of 16S rRNA. In Salmonella agona (strain SL483), this protein is Ribosomal RNA small subunit methyltransferase F.